The sequence spans 447 residues: Phosphoglucosamine mutase (447 aa).

S88 functions as the Phosphoserine intermediate in the catalytic mechanism. Mg(2+) contacts are provided by S88, D231, D233, and D235. S88 is modified (phosphoserine).

This sequence belongs to the phosphohexose mutase family. As to quaternary structure, monomer. Also forms large aggregates. Mg(2+) serves as cofactor. Activated by phosphorylation. Glucose-1,6-bisphosphate or fructose-1,6-bisphosphate can activate the enzyme in vitro. However, since glucose-1,6-bisphosphate is not believed to form in methanogens, the physiologically relevant activator might be a serine kinase protein.

It carries out the reaction alpha-D-glucosamine 1-phosphate = D-glucosamine 6-phosphate. Its function is as follows. Catalyzes the conversion of glucosamine-6-phosphate to glucosamine-1-phosphate. Also catalyzes the isomerization of glucose-1-phosphate to glucose-6-phosphate, but at a 5-fold lower rate. In Methanococcus maripaludis (strain DSM 14266 / JCM 13030 / NBRC 101832 / S2 / LL), this protein is Phosphoglucosamine mutase (glmM).